The chain runs to 91 residues: Hepcidin-2 (91 aa).

The signal sequence occupies residues 1 to 24; that stretch reads MKLSNVFLAAVVILTCVCVFQITA. The propeptide occupies 25–64; sequence VPFIQQVQDEHHVESEELQENQHLTEAEHRLTDPLVLFRT. 4 disulfides stabilise this stretch: Cys73-Cys89, Cys76-Cys79, Cys77-Cys85, and Cys80-Cys88.

Belongs to the hepcidin family.

The protein resides in the secreted. Functionally, seems to act as a signaling molecule involved in the maintenance of iron homeostasis. Seems to be required in conjunction with HFE to regulate both intestinal iron absorption and iron storage in macrophages. May also have antimicrobial activity. The protein is Hepcidin-2 (hamp2) of Danio rerio (Zebrafish).